Consider the following 235-residue polypeptide: uncharacterized protein (235 aa).

The interval methionine 1–lysine 98 is disordered. Glycyl lysine isopeptide (Lys-Gly) (interchain with G-Cter in ubiquitin) cross-links involve residues lysine 16 and lysine 35. Positions asparagine 38–asparagine 50 are enriched in basic residues. A compositionally biased stretch (basic and acidic residues) spans lysine 51–glutamate 60.

This is an uncharacterized protein from Saccharomyces cerevisiae (strain ATCC 204508 / S288c) (Baker's yeast).